A 247-amino-acid polypeptide reads, in one-letter code: Cytochrome c oxidase subunit 2 (247 aa).

Over 12-38 (DVPTPWGLYFQDSSTPNQEGIIELHDN) the chain is Mitochondrial intermembrane. The helical transmembrane segment at 39 to 59 (IMFYLVLILCTVSWLLFSIVK) threads the bilayer. The Mitochondrial matrix portion of the chain corresponds to 60–78 (DSSKNPLPHKYLVHGQTIE). A helical membrane pass occupies residues 79–101 (IIWTILPAVVLLIIAFPSFILLY). The Mitochondrial intermembrane portion of the chain corresponds to 102 to 247 (LCDEVISPAM…KEFLTWLNEQ (146 aa)). Residues histidine 182, cysteine 217, glutamate 219, cysteine 221, histidine 225, and methionine 228 each contribute to the Cu cation site. Glutamate 219 lines the Mg(2+) pocket.

The protein belongs to the cytochrome c oxidase subunit 2 family. In terms of assembly, component of the cytochrome c oxidase (complex IV, CIV), a multisubunit enzyme composed of a catalytic core of 3 subunits and several supernumerary subunits. The complex exists as a monomer or a dimer and forms supercomplexes (SCs) in the inner mitochondrial membrane with ubiquinol-cytochrome c oxidoreductase (cytochrome b-c1 complex, complex III, CIII). It depends on Cu cation as a cofactor. Post-translationally, the signal sequence of COX2 is processed by IMP1.

The protein localises to the mitochondrion inner membrane. The catalysed reaction is 4 Fe(II)-[cytochrome c] + O2 + 8 H(+)(in) = 4 Fe(III)-[cytochrome c] + 2 H2O + 4 H(+)(out). Its function is as follows. Component of the cytochrome c oxidase, the last enzyme in the mitochondrial electron transport chain which drives oxidative phosphorylation. The respiratory chain contains 3 multisubunit complexes succinate dehydrogenase (complex II, CII), ubiquinol-cytochrome c oxidoreductase (cytochrome b-c1 complex, complex III, CIII) and cytochrome c oxidase (complex IV, CIV), that cooperate to transfer electrons derived from NADH and succinate to molecular oxygen, creating an electrochemical gradient over the inner membrane that drives transmembrane transport and the ATP synthase. Cytochrome c oxidase is the component of the respiratory chain that catalyzes the reduction of oxygen to water. Electrons originating from reduced cytochrome c in the intermembrane space (IMS) are transferred via the dinuclear copper A center (CU(A)) of subunit 2 and heme A of subunit 1 to the active site in subunit 1, a binuclear center (BNC) formed by heme A3 and copper B (CU(B)). The BNC reduces molecular oxygen to 2 water molecules using 4 electrons from cytochrome c in the IMS and 4 protons from the mitochondrial matrix. This Cyberlindnera saturnus (Yeast) protein is Cytochrome c oxidase subunit 2 (COX2).